The primary structure comprises 211 residues: Nucleoside triphosphate pyrophosphatase (211 aa).

Asp75 acts as the Proton acceptor in catalysis.

Belongs to the Maf family. A divalent metal cation is required as a cofactor.

It is found in the cytoplasm. The enzyme catalyses a ribonucleoside 5'-triphosphate + H2O = a ribonucleoside 5'-phosphate + diphosphate + H(+). It catalyses the reaction a 2'-deoxyribonucleoside 5'-triphosphate + H2O = a 2'-deoxyribonucleoside 5'-phosphate + diphosphate + H(+). Its function is as follows. Nucleoside triphosphate pyrophosphatase. May have a dual role in cell division arrest and in preventing the incorporation of modified nucleotides into cellular nucleic acids. The chain is Nucleoside triphosphate pyrophosphatase from Prochlorococcus marinus (strain NATL2A).